The following is a 372-amino-acid chain: Transaldolase (372 aa).

Catalysis depends on Lys140, which acts as the Schiff-base intermediate with substrate.

The protein belongs to the transaldolase family. Type 2 subfamily.

The protein resides in the cytoplasm. It catalyses the reaction D-sedoheptulose 7-phosphate + D-glyceraldehyde 3-phosphate = D-erythrose 4-phosphate + beta-D-fructose 6-phosphate. The protein operates within carbohydrate degradation; pentose phosphate pathway; D-glyceraldehyde 3-phosphate and beta-D-fructose 6-phosphate from D-ribose 5-phosphate and D-xylulose 5-phosphate (non-oxidative stage): step 2/3. Its function is as follows. Transaldolase is important for the balance of metabolites in the pentose-phosphate pathway. The protein is Transaldolase of Acidothermus cellulolyticus (strain ATCC 43068 / DSM 8971 / 11B).